Here is a 198-residue protein sequence, read N- to C-terminus: NAD(P)H dehydrogenase (quinone) (198 aa).

The 186-residue stretch at 4–189 (ILVLYYSMYG…AIARYQGEHV (186 aa)) folds into the Flavodoxin-like domain. Residues 10–15 (SMYGHI) and 78–80 (TRF) contribute to the FMN site. Position 12 (Y12) interacts with NAD(+). W98 contacts substrate. Residues 113–118 (STGTGG) and H133 contribute to the FMN site.

Belongs to the WrbA family. It depends on FMN as a cofactor.

The enzyme catalyses a quinone + NADH + H(+) = a quinol + NAD(+). The catalysed reaction is a quinone + NADPH + H(+) = a quinol + NADP(+). The polypeptide is NAD(P)H dehydrogenase (quinone) (Klebsiella pneumoniae (strain 342)).